The chain runs to 122 residues: Large ribosomal subunit protein uL14 (122 aa).

It belongs to the universal ribosomal protein uL14 family. In terms of assembly, part of the 50S ribosomal subunit. Forms a cluster with proteins L3 and L19. In the 70S ribosome, L14 and L19 interact and together make contacts with the 16S rRNA in bridges B5 and B8.

Binds to 23S rRNA. Forms part of two intersubunit bridges in the 70S ribosome. This chain is Large ribosomal subunit protein uL14, found in Syntrophotalea carbinolica (strain DSM 2380 / NBRC 103641 / GraBd1) (Pelobacter carbinolicus).